A 299-amino-acid chain; its full sequence is Sulfate adenylyltransferase subunit 2 (299 aa).

A disordered region spans residues 276-299 (EREGRVIDHDSAGSMEKKKREGYF).

It belongs to the PAPS reductase family. CysD subfamily. Heterodimer composed of CysD, the smaller subunit, and CysN.

It catalyses the reaction sulfate + ATP + H(+) = adenosine 5'-phosphosulfate + diphosphate. Its pathway is sulfur metabolism; hydrogen sulfide biosynthesis; sulfite from sulfate: step 1/3. In terms of biological role, with CysN forms the ATP sulfurylase (ATPS) that catalyzes the adenylation of sulfate producing adenosine 5'-phosphosulfate (APS) and diphosphate, the first enzymatic step in sulfur assimilation pathway. APS synthesis involves the formation of a high-energy phosphoric-sulfuric acid anhydride bond driven by GTP hydrolysis by CysN coupled to ATP hydrolysis by CysD. In Pseudoalteromonas translucida (strain TAC 125), this protein is Sulfate adenylyltransferase subunit 2.